Reading from the N-terminus, the 292-residue chain is MSPTDMKAVVFYGPHSIAIESRPIPKVQHDKDIVVKVSASGLCGSDLHYFRGHEVVDSAGFIMGHEFVGEVVEAGRAVTTVRPGDKVVSPFTVSCGDCFYCKLQNSSRCVHCQVFGSNGLDGAQAEYVRVPLADSTVVRAPPGLSDDALILMADIFPTGFFGARNAMAGLGAQDPTEAVVVVIGCGPVGLCAIVSALEYRPRVVFAIDSVDSRLGLAEKLGARPLDLKKGVPSIISAVQEVTEGRGADAVVEVVGQGPALRTAYDIIRPFGSISSIGAHHSAMPFSATDGYE.

Cys-43 is a binding site for Zn(2+). Position 49 (Tyr-49) interacts with substrate. Zn(2+)-binding residues include His-65 and Glu-66. NAD(+) is bound by residues 184–189 (GCGPVG), Asp-208, Arg-213, and 276–278 (IGA).

Belongs to the zinc-containing alcohol dehydrogenase family. The cofactor is Zn(2+).

The protein operates within mycotoxin biosynthesis. Functionally, medium chain reductase/dehydrogenase; part of the gene cluster that mediates the biosynthesis of UCS1025A, a member of the pyrrolizidinone family that acts as a strong telomerase inhibitor and displays potent antibacterial and antitumor properties. These compounds share a hemiaminal-containing pyrrolizidinone core fused with a gamma-lactone, giving a furopyrrolizidine that is connected to a decalin fragment. The polyketide synthase module (PKS) of the PKS-NRPS ucsA is responsible for the synthesis of the polyketide backbone via the condensation of an acetyl-CoA starter unit with 6 malonyl-CoA units. The downstream nonribosomal peptide synthetase (NRPS) module then amidates the carboxyl end of the polyketide with a 2S,3S-methylproline derived from L-isoleucine by the 2-oxoglutarate-dependent dioxygenase ucsF which converts L-isoleucine to (4S,5S)-4-methylpyrroline-5-carboxylate that is further converted to 2S,3S-methylproline by the pyrroline-5-carboxylate reductase ucsG. Reductive release of the completed aminoacyl polyketide from the assembly line can form the 3-pyrrolin-2-one structure via an intramolecular Knoevenagel reaction. Because ucsA lacks a designated enoylreductase (ER) domain, the required activity is provided the enoyl reductase ucsL. This keto acyclic precursor is the substrate of the Diels-Alderase ucsH, that catalyzes the Diels-Alder cycloaddition. Oxidation of the 3S-methyl group to a carboxylate by the cytochrome P450 monooxygenase ucsK allows an oxa-Michael cyclization that might involve the reductase/dehydrogenase ucsI and which furnishes the furopyrrolizidine. The oxidase ucsJ likely plays a critical role in stereoselective reduction of the C5-C6 double bond to afford the required R-configured carboxylate group. Further enolization and oxidation at C5 by an unidentified enzyme affords the last intermediate that can undergo oxa-Michael cyclization to yield UCS1025A. In Acremonium sp, this protein is Medium chain reductase/dehydrogenase ucsI.